The following is a 143-amino-acid chain: Deoxyuridine 5'-triphosphate nucleotidohydrolase (143 aa).

Substrate is bound by residues 62–64, asparagine 75, and 79–81; these read RSG and TID.

Belongs to the dUTPase family. Requires Mg(2+) as cofactor.

It catalyses the reaction dUTP + H2O = dUMP + diphosphate + H(+). Its pathway is pyrimidine metabolism; dUMP biosynthesis; dUMP from dCTP (dUTP route): step 2/2. In terms of biological role, this enzyme is involved in nucleotide metabolism: it produces dUMP, the immediate precursor of thymidine nucleotides and it decreases the intracellular concentration of dUTP so that uracil cannot be incorporated into DNA. The sequence is that of Deoxyuridine 5'-triphosphate nucleotidohydrolase from Acaryochloris marina (strain MBIC 11017).